The primary structure comprises 591 residues: V-type ATP synthase alpha chain (591 aa).

233-240 (GPFGAGKT) contacts ATP.

The protein belongs to the ATPase alpha/beta chains family.

It carries out the reaction ATP + H2O + 4 H(+)(in) = ADP + phosphate + 5 H(+)(out). Functionally, produces ATP from ADP in the presence of a proton gradient across the membrane. The V-type alpha chain is a catalytic subunit. In Streptococcus pyogenes serotype M5 (strain Manfredo), this protein is V-type ATP synthase alpha chain.